A 97-amino-acid polypeptide reads, in one-letter code: Co-chaperonin GroES (97 aa).

It belongs to the GroES chaperonin family. As to quaternary structure, heptamer of 7 subunits arranged in a ring. Interacts with the chaperonin GroEL.

It localises to the cytoplasm. Functionally, together with the chaperonin GroEL, plays an essential role in assisting protein folding. The GroEL-GroES system forms a nano-cage that allows encapsulation of the non-native substrate proteins and provides a physical environment optimized to promote and accelerate protein folding. GroES binds to the apical surface of the GroEL ring, thereby capping the opening of the GroEL channel. This Pseudarthrobacter chlorophenolicus (strain ATCC 700700 / DSM 12829 / CIP 107037 / JCM 12360 / KCTC 9906 / NCIMB 13794 / A6) (Arthrobacter chlorophenolicus) protein is Co-chaperonin GroES.